The chain runs to 374 residues: Peptide chain release factor 2 (374 aa).

Glutamine 250 is subject to N5-methylglutamine.

The protein belongs to the prokaryotic/mitochondrial release factor family. Post-translationally, methylated by PrmC. Methylation increases the termination efficiency of RF2.

The protein resides in the cytoplasm. Peptide chain release factor 2 directs the termination of translation in response to the peptide chain termination codons UGA and UAA. In Beutenbergia cavernae (strain ATCC BAA-8 / DSM 12333 / CCUG 43141 / JCM 11478 / NBRC 16432 / NCIMB 13614 / HKI 0122), this protein is Peptide chain release factor 2.